Consider the following 154-residue polypeptide: SKP1-like protein 13 (154 aa).

The segment at 96–154 (MLAANYLNIKDLLDLGCQTVADMITGKKPDEIRALLGIENDFTPEEEEEIRKENQWAFE) is interaction with the F-box domain of F-box proteins.

It belongs to the SKP1 family. Part of a SCF (SKP1-cullin-F-box) protein ligase complex. Interacts with ADO3/FKF1, EBF1, PP2A13, SKIP15, SKIP16, CPR1/CPR30, At1g55000, At3g61590, At1g67340, At1g78100, At3g04660, At4g38940, At4g39550 and At5g49610. As to expression, mostly expressed in inflorescences, and, to a lower extent, in seedlings and siliques. Also detected in cotyledons, leaves, pollen and seeds.

Its subcellular location is the nucleus. It functions in the pathway protein modification; protein ubiquitination. Its function is as follows. Involved in ubiquitination and subsequent proteasomal degradation of target proteins. Together with CUL1, RBX1 and a F-box protein, it forms a SCF E3 ubiquitin ligase complex. The functional specificity of this complex depends on the type of F-box protein. In the SCF complex, it serves as an adapter that links the F-box protein to CUL1. The polypeptide is SKP1-like protein 13 (ASK13) (Arabidopsis thaliana (Mouse-ear cress)).